The primary structure comprises 617 residues: uncharacterized protein (617 aa).

Residues 10-30 (AFFFFFVSLILLFLSPSYSDV) form a helical membrane-spanning segment. Positions 34–58 (ESDPIPYENSDASPGVVTSSESDRQ) are disordered. Over residues 43-53 (SDASPGVVTSS) the composition is skewed to polar residues. Residues 60–86 (VSLHRLEELVRNLTELVARLDAKLSET) are a coiled coil. The chain crosses the membrane as a helical span at residues 473-493 (MLWSSPVFFFILFLFGAWHFF). Residues 511–529 (STTMSSSSTTTAQNSSAFS) show a composition bias toward low complexity. The tract at residues 511–617 (STTMSSSSTT…GNNKALDDES (107 aa)) is disordered. Residues 531–543 (STRRNDDHMDLRR) are compositionally biased toward basic and acidic residues. Over residues 563-584 (VGSNDPSSRAPVETTNYRTTAQ) the composition is skewed to polar residues. Positions 590–599 (GGSGLDSGGF) are enriched in gly residues.

It is found in the membrane. This is an uncharacterized protein from Arabidopsis thaliana (Mouse-ear cress).